Consider the following 89-residue polypeptide: HssA/B-like protein 21 (89 aa).

This sequence belongs to the hssA/B family.

The sequence is that of HssA/B-like protein 21 (hssl21) from Dictyostelium discoideum (Social amoeba).